Consider the following 783-residue polypeptide: Probable phosphoketolase (783 aa).

Belongs to the XFP family. Thiamine diphosphate serves as cofactor.

The chain is Probable phosphoketolase from Rhodopseudomonas palustris (strain TIE-1).